The following is a 1047-amino-acid chain: Atrial natriuretic peptide receptor 2 (1047 aa).

A signal peptide spans methionine 1 to glycine 16. The Extracellular segment spans residues valine 17–isoleucine 458. N-linked (GlcNAc...) asparagine glycosylation is found at asparagine 24 and asparagine 35. Cysteine 75 and cysteine 101 are oxidised to a cystine. Asparagine 161, asparagine 195, asparagine 244, asparagine 277, and asparagine 349 each carry an N-linked (GlcNAc...) asparagine glycan. Residues valine 459–phenylalanine 478 form a helical membrane-spanning segment. Residues arginine 479–leucine 1047 lie on the Cytoplasmic side of the membrane. A Phosphoserine modification is found at serine 513. One can recognise a Protein kinase domain in the interval serine 513–isoleucine 786. Phosphothreonine is present on threonine 516. Phosphoserine occurs at positions 518, 522, 523, and 526. Threonine 529 is subject to Phosphothreonine. The Guanylate cyclase domain occupies threonine 861 to glutamate 991.

Belongs to the adenylyl cyclase class-4/guanylyl cyclase family. Post-translationally, phosphorylated. Phosphorylation of the protein kinase-like domain is required for full activation by CNP. Glycosylated.

The protein resides in the cell membrane. It catalyses the reaction GTP = 3',5'-cyclic GMP + diphosphate. Receptor for the C-type natriuretic peptide NPPC/CNP hormone. Has guanylate cyclase activity upon binding of its ligand. May play a role in the regulation of skeletal growth. The sequence is that of Atrial natriuretic peptide receptor 2 (NPR2) from Bos taurus (Bovine).